Here is a 336-residue protein sequence, read N- to C-terminus: Holliday junction branch migration complex subunit RuvB (336 aa).

The large ATPase domain (RuvB-L) stretch occupies residues methionine 1–tyrosine 182. ATP-binding positions include leucine 21, arginine 22, glycine 63, lysine 66, threonine 67, serine 68, glutamate 129–phenylalanine 131, arginine 172, tyrosine 182, and arginine 219. Threonine 67 lines the Mg(2+) pocket. The small ATPAse domain (RuvB-S) stretch occupies residues serine 183–glycine 253. Positions glutamate 256–phenylalanine 336 are head domain (RuvB-H). Residues arginine 310 and arginine 315 each contribute to the DNA site.

This sequence belongs to the RuvB family. In terms of assembly, homohexamer. Forms an RuvA(8)-RuvB(12)-Holliday junction (HJ) complex. HJ DNA is sandwiched between 2 RuvA tetramers; dsDNA enters through RuvA and exits via RuvB. An RuvB hexamer assembles on each DNA strand where it exits the tetramer. Each RuvB hexamer is contacted by two RuvA subunits (via domain III) on 2 adjacent RuvB subunits; this complex drives branch migration. In the full resolvosome a probable DNA-RuvA(4)-RuvB(12)-RuvC(2) complex forms which resolves the HJ.

The protein resides in the cytoplasm. It catalyses the reaction ATP + H2O = ADP + phosphate + H(+). Functionally, the RuvA-RuvB-RuvC complex processes Holliday junction (HJ) DNA during genetic recombination and DNA repair, while the RuvA-RuvB complex plays an important role in the rescue of blocked DNA replication forks via replication fork reversal (RFR). RuvA specifically binds to HJ cruciform DNA, conferring on it an open structure. The RuvB hexamer acts as an ATP-dependent pump, pulling dsDNA into and through the RuvAB complex. RuvB forms 2 homohexamers on either side of HJ DNA bound by 1 or 2 RuvA tetramers; 4 subunits per hexamer contact DNA at a time. Coordinated motions by a converter formed by DNA-disengaged RuvB subunits stimulates ATP hydrolysis and nucleotide exchange. Immobilization of the converter enables RuvB to convert the ATP-contained energy into a lever motion, pulling 2 nucleotides of DNA out of the RuvA tetramer per ATP hydrolyzed, thus driving DNA branch migration. The RuvB motors rotate together with the DNA substrate, which together with the progressing nucleotide cycle form the mechanistic basis for DNA recombination by continuous HJ branch migration. Branch migration allows RuvC to scan DNA until it finds its consensus sequence, where it cleaves and resolves cruciform DNA. The chain is Holliday junction branch migration complex subunit RuvB from Helicobacter pylori (strain G27).